The chain runs to 375 residues: Platelet-derived growth factor receptor-like protein (375 aa).

An N-terminal signal peptide occupies residues 1–21 (MKFWLLLGLLLLHEALEDVAG). Residues 20-63 (AGQHSPKNKRPKEQGENRIKPTNKKAKPKIPKVKDRDSTDSTAK) are disordered. Positions 40 to 50 (PTNKKAKPKIP) are enriched in basic residues. The Ig-like C2-type 1 domain maps to 47–159 (PKIPKVKDRD…GYICRRDEAK (113 aa)). Residues Cys96 and Cys143 are joined by a disulfide bond. Residue Asn219 is glycosylated (N-linked (GlcNAc...) asparagine). The Ig-like C2-type 2 domain occupies 272–375 (PSTTILASSN…TTVATTVEFS (104 aa)). Cys293 and Cys357 are disulfide-bonded.

As to quaternary structure, forms a complex composed of PDGFRL, TNK2 and GRB2.

It localises to the secreted. The chain is Platelet-derived growth factor receptor-like protein (Pdgfrl) from Mus musculus (Mouse).